Consider the following 269-residue polypeptide: Putative hydro-lyase Swoo_1731 (269 aa).

Belongs to the D-glutamate cyclase family.

The sequence is that of Putative hydro-lyase Swoo_1731 from Shewanella woodyi (strain ATCC 51908 / MS32).